An 83-amino-acid polypeptide reads, in one-letter code: Small ribosomal subunit protein bS16 (83 aa).

It belongs to the bacterial ribosomal protein bS16 family.

The sequence is that of Small ribosomal subunit protein bS16 from Shewanella denitrificans (strain OS217 / ATCC BAA-1090 / DSM 15013).